The sequence spans 241 residues: 4-hydroxy-tetrahydrodipicolinate reductase (241 aa).

Residues 7-12 (GVNGHM), 74-76 (GTT), and 98-101 (STNM) each bind NAD(+). Histidine 131 (proton donor/acceptor) is an active-site residue. Histidine 132 contacts (S)-2,3,4,5-tetrahydrodipicolinate. Lysine 135 serves as the catalytic Proton donor. Residue 141-142 (GS) coordinates (S)-2,3,4,5-tetrahydrodipicolinate.

This sequence belongs to the DapB family.

It is found in the cytoplasm. The enzyme catalyses (S)-2,3,4,5-tetrahydrodipicolinate + NAD(+) + H2O = (2S,4S)-4-hydroxy-2,3,4,5-tetrahydrodipicolinate + NADH + H(+). It catalyses the reaction (S)-2,3,4,5-tetrahydrodipicolinate + NADP(+) + H2O = (2S,4S)-4-hydroxy-2,3,4,5-tetrahydrodipicolinate + NADPH + H(+). The protein operates within amino-acid biosynthesis; L-lysine biosynthesis via DAP pathway; (S)-tetrahydrodipicolinate from L-aspartate: step 4/4. Catalyzes the conversion of 4-hydroxy-tetrahydrodipicolinate (HTPA) to tetrahydrodipicolinate. The polypeptide is 4-hydroxy-tetrahydrodipicolinate reductase (Alkaliphilus oremlandii (strain OhILAs) (Clostridium oremlandii (strain OhILAs))).